We begin with the raw amino-acid sequence, 430 residues long: Ribosomal protein uS12 methylthiotransferase RimO (430 aa).

Residues 1-116 (MKIGIKVLGC…IAEAIEKATP (116 aa)) form the MTTase N-terminal domain. [4Fe-4S] cluster-binding residues include C10, C46, C79, C146, C150, and C153. Positions 132–362 (SCNNSFAYVK…LIFQSQIAYE (231 aa)) constitute a Radical SAM core domain. In terms of domain architecture, TRAM spans 365–430 (KRFVGKNLNV…DEYDLKGELI (66 aa)).

This sequence belongs to the methylthiotransferase family. RimO subfamily. [4Fe-4S] cluster serves as cofactor.

It localises to the cytoplasm. It carries out the reaction L-aspartate(89)-[ribosomal protein uS12]-hydrogen + (sulfur carrier)-SH + AH2 + 2 S-adenosyl-L-methionine = 3-methylsulfanyl-L-aspartate(89)-[ribosomal protein uS12]-hydrogen + (sulfur carrier)-H + 5'-deoxyadenosine + L-methionine + A + S-adenosyl-L-homocysteine + 2 H(+). Catalyzes the methylthiolation of an aspartic acid residue of ribosomal protein uS12. The chain is Ribosomal protein uS12 methylthiotransferase RimO from Pseudothermotoga lettingae (strain ATCC BAA-301 / DSM 14385 / NBRC 107922 / TMO) (Thermotoga lettingae).